A 340-amino-acid chain; its full sequence is Integral membrane protein SED5 (340 aa).

Topologically, residues 1–319 (MNIKDRTSEF…KYFDRIKSNR (319 aa)) are cytoplasmic. The segment at 31 to 51 (RLQEKESENFANNTTGNGKSV) is disordered. Residues 39–51 (NFANNTTGNGKSV) show a composition bias toward polar residues. A coiled-coil region spans residues 146–173 (LNTQMKNISGSFKDVLEERQRLEMANKD). The disordered stretch occupies residues 180 to 231 (TDTGHAPADDQTQSNHAADLTTYNNSNPFMTSLLDESSEKNNNSSNQGELSF). The span at 189-209 (DQTQSNHAADLTTYNNSNPFM) shows a compositional bias: polar residues. In terms of domain architecture, t-SNARE coiled-coil homology spans 249-311 (NVYLQERNRA…SGAQRELLKY (63 aa)). Residues 320–340 (WLAAKVFFIIFVFFVIWVLVN) form a helical; Anchor for type IV membrane protein membrane-spanning segment.

This sequence belongs to the syntaxin family. In terms of assembly, interacts with SLY1, STF1, SFB3 and GOS1.

The protein localises to the membrane. Its subcellular location is the golgi apparatus membrane. Functionally, required for vesicular transport between the endoplasmic reticulum and the Golgi complex. Acts as a target organelle soluble NSF attachment protein receptor (t-SNARE). The protein is Integral membrane protein SED5 (SED5) of Saccharomyces cerevisiae (strain ATCC 204508 / S288c) (Baker's yeast).